Reading from the N-terminus, the 152-residue chain is Snaclec coagulation factor IX/factor X-binding protein subunit A (152 aa).

The N-terminal stretch at 1–23 (MGRFIFMSFGLLVVAASLRGTGA) is a signal peptide. Residues 24–152 (DCLSGWSSYE…GQQNPFVCEA (129 aa)) enclose the C-type lectin domain. 3 cysteine pairs are disulfide-bonded: Cys25-Cys36, Cys53-Cys150, and Cys125-Cys142. Ca(2+) contacts are provided by Ser64, Glu66, and Glu70. Ca(2+) is bound at residue Glu151.

The protein belongs to the snaclec family. As to quaternary structure, heterodimer of subunits A and B; disulfide-linked. As to expression, expressed by the venom gland.

The protein localises to the secreted. Anticoagulant protein which binds to the gamma-carboxyglutamic acid-domain regions of factors IX (F9) and factor X (F10) in the presence of calcium with a 1 to 1 stoichiometry. The chain is Snaclec coagulation factor IX/factor X-binding protein subunit A from Protobothrops flavoviridis (Habu).